The following is a 1181-amino-acid chain: Lysine-specific demethylase hairless (1181 aa).

Residues 311–323 show a composition bias toward pro residues; the sequence is TPRCPSPGPPTPP. 3 disordered regions span residues 311-378, 413-472, and 509-543; these read TPRC…HTKL, AGSP…DGRI, and SHSQ…PEAS. The segment covering 347–357 has biased composition (low complexity); the sequence is SPEGSSSGPGE. The span at 447–461 shows a compositional bias: polar residues; the sequence is TPETSTGSKAEAQQQ. Over residues 462–472 the composition is skewed to basic and acidic residues; it reads EEQRGPRDGRI. Residues 560 to 564 carry the LXXLL motif 1 motif; that stretch reads LCRLL. The C6-type zinc-finger motif lies at 594–619; it reads CSRCHHGLFNTHWRCSHCSHRLCVAC. The interval 696–745 is disordered; that stretch reads GDGGQQKEPTEKTPPAPQLSCNGDSNRTKDIKEETPDSTESPAEDRAGRS. Basic and acidic residues predominate over residues 721–730; the sequence is NRTKDIKEET. The LXXLL motif 2 signature appears at 752–756; sequence LCELL. Positions 938 to 1149 constitute a JmjC domain; sequence DESRVENLAS…LSAQLCHQGA (212 aa). 3 residues coordinate Fe cation: C999, E1001, and H1117.

Fe(2+) is required as a cofactor.

Its subcellular location is the nucleus. It catalyses the reaction N(6),N(6)-dimethyl-L-lysyl(9)-[histone H3] + 2 2-oxoglutarate + 2 O2 = L-lysyl(9)-[histone H3] + 2 formaldehyde + 2 succinate + 2 CO2. Its function is as follows. Histone demethylase that specifically demethylates both mono- and dimethylated 'Lys-9' of histone H3. May act as a transcription regulator controlling hair biology (via targeting of collagens), neural activity, and cell cycle. In Rattus norvegicus (Rat), this protein is Lysine-specific demethylase hairless (Hr).